The sequence spans 316 residues: Acetyl-coenzyme A carboxylase carboxyl transferase subunit alpha (316 aa).

A CoA carboxyltransferase C-terminal domain is found at 39–293 (RLQDKSKALT…RGELLTQLKM (255 aa)).

Belongs to the AccA family. In terms of assembly, acetyl-CoA carboxylase is a heterohexamer composed of biotin carboxyl carrier protein (AccB), biotin carboxylase (AccC) and two subunits each of ACCase subunit alpha (AccA) and ACCase subunit beta (AccD).

Its subcellular location is the cytoplasm. The catalysed reaction is N(6)-carboxybiotinyl-L-lysyl-[protein] + acetyl-CoA = N(6)-biotinyl-L-lysyl-[protein] + malonyl-CoA. Its pathway is lipid metabolism; malonyl-CoA biosynthesis; malonyl-CoA from acetyl-CoA: step 1/1. In terms of biological role, component of the acetyl coenzyme A carboxylase (ACC) complex. First, biotin carboxylase catalyzes the carboxylation of biotin on its carrier protein (BCCP) and then the CO(2) group is transferred by the carboxyltransferase to acetyl-CoA to form malonyl-CoA. The protein is Acetyl-coenzyme A carboxylase carboxyl transferase subunit alpha of Pseudomonas aeruginosa (strain LESB58).